Here is a 418-residue protein sequence, read N- to C-terminus: Probable serine hydroxymethyltransferase (418 aa).

(6S)-5,6,7,8-tetrahydrofolate-binding positions include leucine 118 and 122 to 124; that span reads GHL. Lysine 226 bears the N6-(pyridoxal phosphate)lysine mark. Residue 351–353 coordinates (6S)-5,6,7,8-tetrahydrofolate; it reads SPF.

The protein belongs to the SHMT family. As to quaternary structure, homodimer. The cofactor is pyridoxal 5'-phosphate.

Its subcellular location is the cytoplasm. It catalyses the reaction (6R)-5,10-methylene-5,6,7,8-tetrahydrofolate + glycine + H2O = (6S)-5,6,7,8-tetrahydrofolate + L-serine. It participates in one-carbon metabolism; tetrahydrofolate interconversion. In terms of biological role, catalyzes the reversible interconversion of serine and glycine with tetrahydrofolate (THF) serving as the one-carbon carrier. This reaction serves as the major source of one-carbon groups required for the biosynthesis of purines, thymidylate, methionine, and other important biomolecules. The sequence is that of Probable serine hydroxymethyltransferase from Mesomycoplasma hyopneumoniae (strain 7448) (Mycoplasma hyopneumoniae).